Here is a 171-residue protein sequence, read N- to C-terminus: MNHFELFRLPFQFELDGGLLSTQFRELQRRFHPDNFATASERDRLMSVQKAAQINDAFQTLKNPISRAEYMLSEQDMDIRGEQKTLQDPEFLMQQMELREELEDISDASDPESALFDFEQQVTALYKSQLSALEQLLNQDDWEEAADAVRKLKFIDKLRYEIERLEETFFD.

The J domain maps to 2-74; it reads NHFELFRLPF…ISRAEYMLSE (73 aa).

Belongs to the HscB family. In terms of assembly, interacts with HscA and stimulates its ATPase activity.

In terms of biological role, co-chaperone involved in the maturation of iron-sulfur cluster-containing proteins. Seems to help targeting proteins to be folded toward HscA. This Photobacterium profundum (strain SS9) protein is Co-chaperone protein HscB homolog.